A 146-amino-acid chain; its full sequence is Large ribosomal subunit protein uL13 (146 aa).

It belongs to the universal ribosomal protein uL13 family. In terms of assembly, part of the 50S ribosomal subunit.

Its function is as follows. This protein is one of the early assembly proteins of the 50S ribosomal subunit, although it is not seen to bind rRNA by itself. It is important during the early stages of 50S assembly. This chain is Large ribosomal subunit protein uL13, found in Methylobacillus flagellatus (strain ATCC 51484 / DSM 6875 / VKM B-1610 / KT).